The primary structure comprises 1737 residues: Myosin-M heavy chain (1737 aa).

The region spanning 4–55 is the Myosin N-terminal SH3-like domain; sequence LEGDIVWVPHTVNGYCRGKIIGYNEKNQVTVRLLELNEEIKINEQLIQNYNQ. The 828-residue stretch at 59–886 folds into the Myosin motor domain; that stretch reads KDFSDMVEIQ…LYIYLEKKRY (828 aa). 154–161 is a binding site for ATP; the sequence is GESGSGKT. Residues 640 to 727 form a disordered region; that stretch reads KSNDNNSNNN…NNNSSNNKKS (88 aa). Low complexity-rich tracts occupy residues 641–663 and 679–724; these read SNDN…SSQS and NSGS…SSNN. The actin-binding stretch occupies residues 754–761; sequence YIRCIKPN. 2 IQ domains span residues 889–918 and 912–941; these read LVDS…SSLF and NKES…LENK. Residues 926-1039 adopt a coiled-coil conformation; that stretch reads QRAKKDFEQL…KKKNEQNLSL (114 aa). Basic and acidic residues predominate over residues 947 to 1028; sequence RKKELERQRK…IEKKRKEEEK (82 aa). Disordered regions lie at residues 947 to 1099, 1117 to 1199, 1266 to 1290, and 1304 to 1364; these read RKKE…PSTK, LHGS…PNFN, GINK…ANSS, and SLST…SNED. Low complexity predominate over residues 1044-1070; it reads ITNSPSLINTTTTTTTTTTTTTNTSSP. The segment covering 1071–1081 has biased composition (pro residues); it reads PLSPPISPRPS. Over residues 1082–1098 the composition is skewed to low complexity; the sequence is TPSSTSSSSSTTSSPST. Residues 1121–1131 show a composition bias toward basic and acidic residues; it reads SHSDKNSKEDN. Residues 1132 to 1141 are compositionally biased toward low complexity; the sequence is NSNNNNNGDS. The span at 1143-1153 shows a compositional bias: polar residues; sequence IILSSDSSFGQ. Pro residues predominate over residues 1162–1171; sequence PTPPPPPPLK. Composition is skewed to polar residues over residues 1180-1198 and 1274-1288; these read GVEN…SPNF and RTIS…SRAN. Low complexity predominate over residues 1304–1359; sequence SLSTSTTPSTPTTPKTPTTLSSSSVSTSTSLSSVSSSVSSSSSSSIPTPIIESTPS. The DH domain maps to 1389-1572; it reads FRIKIINELI…SDIVQSINEA (184 aa). The region spanning 1603–1714 is the PH domain; the sequence is TLLMEGTVSA…WFKQIKALIQ (112 aa).

It belongs to the TRAFAC class myosin-kinesin ATPase superfamily. Myosin family. Monomer.

It is found in the cytoplasm. Myosins are actin-based motor molecules with ATPase activity. Involved in macropinocytosis and remodeling of actin cytoskeleton. This is Myosin-M heavy chain (myoM) from Dictyostelium discoideum (Social amoeba).